Here is a 72-residue protein sequence, read N- to C-terminus: Translation initiation factor IF-1 (72 aa).

The S1-like domain maps to 1–72 (MSKEEVLEFS…TKGRITYRYK (72 aa)).

Belongs to the IF-1 family. In terms of assembly, component of the 30S ribosomal translation pre-initiation complex which assembles on the 30S ribosome in the order IF-2 and IF-3, IF-1 and N-formylmethionyl-tRNA(fMet); mRNA recruitment can occur at any time during PIC assembly.

The protein localises to the cytoplasm. One of the essential components for the initiation of protein synthesis. Stabilizes the binding of IF-2 and IF-3 on the 30S subunit to which N-formylmethionyl-tRNA(fMet) subsequently binds. Helps modulate mRNA selection, yielding the 30S pre-initiation complex (PIC). Upon addition of the 50S ribosomal subunit IF-1, IF-2 and IF-3 are released leaving the mature 70S translation initiation complex. The chain is Translation initiation factor IF-1 from Bartonella quintana (strain Toulouse) (Rochalimaea quintana).